A 254-amino-acid polypeptide reads, in one-letter code: Thiazole synthase (254 aa).

Catalysis depends on Lys95, which acts as the Schiff-base intermediate with DXP. 1-deoxy-D-xylulose 5-phosphate contacts are provided by residues Gly156, 182 to 183 (AG), and 204 to 205 (NT).

Belongs to the ThiG family. As to quaternary structure, homotetramer. Forms heterodimers with either ThiH or ThiS.

Its subcellular location is the cytoplasm. It catalyses the reaction [ThiS sulfur-carrier protein]-C-terminal-Gly-aminoethanethioate + 2-iminoacetate + 1-deoxy-D-xylulose 5-phosphate = [ThiS sulfur-carrier protein]-C-terminal Gly-Gly + 2-[(2R,5Z)-2-carboxy-4-methylthiazol-5(2H)-ylidene]ethyl phosphate + 2 H2O + H(+). It participates in cofactor biosynthesis; thiamine diphosphate biosynthesis. Functionally, catalyzes the rearrangement of 1-deoxy-D-xylulose 5-phosphate (DXP) to produce the thiazole phosphate moiety of thiamine. Sulfur is provided by the thiocarboxylate moiety of the carrier protein ThiS. In vitro, sulfur can be provided by H(2)S. In Shewanella baltica (strain OS223), this protein is Thiazole synthase.